The sequence spans 325 residues: Acetyl-coenzyme A carboxylase carboxyl transferase subunit alpha (325 aa).

The CoA carboxyltransferase C-terminal domain occupies 44–298 (QLEGRAEQLR…KTAILSNLEE (255 aa)).

It belongs to the AccA family. As to quaternary structure, acetyl-CoA carboxylase is a heterohexamer composed of biotin carboxyl carrier protein (AccB), biotin carboxylase (AccC) and two subunits each of ACCase subunit alpha (AccA) and ACCase subunit beta (AccD).

It is found in the cytoplasm. It catalyses the reaction N(6)-carboxybiotinyl-L-lysyl-[protein] + acetyl-CoA = N(6)-biotinyl-L-lysyl-[protein] + malonyl-CoA. The protein operates within lipid metabolism; malonyl-CoA biosynthesis; malonyl-CoA from acetyl-CoA: step 1/1. Component of the acetyl coenzyme A carboxylase (ACC) complex. First, biotin carboxylase catalyzes the carboxylation of biotin on its carrier protein (BCCP) and then the CO(2) group is transferred by the carboxyltransferase to acetyl-CoA to form malonyl-CoA. The polypeptide is Acetyl-coenzyme A carboxylase carboxyl transferase subunit alpha (Acaryochloris marina (strain MBIC 11017)).